The chain runs to 278 residues: Small ribosomal subunit biogenesis GTPase RsgA (278 aa).

Positions 62–218 (KNELTRPRVA…ICDTPGFNVI (157 aa)) constitute a CP-type G domain. GTP contacts are provided by residues 112–115 (TKTD) and 162–170 (GQSGVGKSS). The Zn(2+) site is built by Cys-241, Cys-246, His-248, and Cys-254.

It belongs to the TRAFAC class YlqF/YawG GTPase family. RsgA subfamily. Monomer. Associates with 30S ribosomal subunit, binds 16S rRNA. Zn(2+) is required as a cofactor.

Its subcellular location is the cytoplasm. Its function is as follows. One of several proteins that assist in the late maturation steps of the functional core of the 30S ribosomal subunit. Helps release RbfA from mature subunits. May play a role in the assembly of ribosomal proteins into the subunit. Circularly permuted GTPase that catalyzes slow GTP hydrolysis, GTPase activity is stimulated by the 30S ribosomal subunit. This chain is Small ribosomal subunit biogenesis GTPase RsgA, found in Mycoplasma genitalium (strain ATCC 33530 / DSM 19775 / NCTC 10195 / G37) (Mycoplasmoides genitalium).